The chain runs to 469 residues: Neuraminidase (469 aa).

Topologically, residues 1–9 (MNPNQKIIT) are intravirion. A helical membrane pass occupies residues 10 to 30 (IGSVSLTFAAICFLMQIAILV). The tract at residues 11–33 (GSVSLTFAAICFLMQIAILVTTV) is involved in apical transport and lipid raft association. The Virion surface segment spans residues 31–469 (TTVTLNFKQY…DGADINLMPI (439 aa)). Residues 36-88 (NFKQYECDPPATNQVMPCEPIIIERNITEIVYLTNTTIEREICPKLVEYRNWS) form a hypervariable stalk region region. Residues asparagine 61, asparagine 70, and asparagine 86 are each glycosylated (N-linked (GlcNAc...) asparagine; by host). The head of neuraminidase stretch occupies residues 91-469 (QCKITGFAPF…DGADINLMPI (379 aa)). Cystine bridges form between cysteine 92-cysteine 417, cysteine 124-cysteine 129, cysteine 183-cysteine 230, cysteine 232-cysteine 237, cysteine 278-cysteine 291, cysteine 280-cysteine 289, cysteine 318-cysteine 337, and cysteine 421-cysteine 447. Arginine 118 contacts substrate. Asparagine 146 carries an N-linked (GlcNAc...) asparagine; by host glycan. Aspartate 151 functions as the Proton donor/acceptor in the catalytic mechanism. A substrate-binding site is contributed by arginine 152. Asparagine 200 and asparagine 234 each carry an N-linked (GlcNAc...) asparagine; by host glycan. 276–277 (EE) is a binding site for substrate. Arginine 292 lines the substrate pocket. Ca(2+)-binding residues include aspartate 293 and glycine 297. An N-linked (GlcNAc...) asparagine; by host glycan is attached at asparagine 313. Aspartate 324 serves as a coordination point for Ca(2+). Arginine 371 is a substrate binding site. Asparagine 402 carries N-linked (GlcNAc...) asparagine; by host glycosylation. Tyrosine 406 acts as the Nucleophile in catalysis.

It belongs to the glycosyl hydrolase 34 family. As to quaternary structure, homotetramer. The cofactor is Ca(2+). N-glycosylated.

It localises to the virion membrane. The protein localises to the host apical cell membrane. The catalysed reaction is Hydrolysis of alpha-(2-&gt;3)-, alpha-(2-&gt;6)-, alpha-(2-&gt;8)- glycosidic linkages of terminal sialic acid residues in oligosaccharides, glycoproteins, glycolipids, colominic acid and synthetic substrates.. Inhibited by the neuraminidase inhibitors zanamivir (Relenza) and oseltamivir (Tamiflu). These drugs interfere with the release of progeny virus from infected cells and are effective against all influenza strains. Resistance to neuraminidase inhibitors is quite rare. Its function is as follows. Catalyzes the removal of terminal sialic acid residues from viral and cellular glycoconjugates. Cleaves off the terminal sialic acids on the glycosylated HA during virus budding to facilitate virus release. Additionally helps virus spread through the circulation by further removing sialic acids from the cell surface. These cleavages prevent self-aggregation and ensure the efficient spread of the progeny virus from cell to cell. Otherwise, infection would be limited to one round of replication. Described as a receptor-destroying enzyme because it cleaves a terminal sialic acid from the cellular receptors. May facilitate viral invasion of the upper airways by cleaving the sialic acid moieties on the mucin of the airway epithelial cells. Likely to plays a role in the budding process through its association with lipid rafts during intracellular transport. May additionally display a raft-association independent effect on budding. Plays a role in the determination of host range restriction on replication and virulence. Sialidase activity in late endosome/lysosome traffic seems to enhance virus replication. The sequence is that of Neuraminidase from Influenza A virus (strain A/Swine/Kanagawa/2/1978 H1N2).